Here is a 474-residue protein sequence, read N- to C-terminus: 3-isopropylmalate dehydratase large subunit (474 aa).

The [4Fe-4S] cluster site is built by cysteine 355, cysteine 415, and cysteine 418.

Belongs to the aconitase/IPM isomerase family. LeuC type 1 subfamily. In terms of assembly, heterodimer of LeuC and LeuD. Requires [4Fe-4S] cluster as cofactor.

It carries out the reaction (2R,3S)-3-isopropylmalate = (2S)-2-isopropylmalate. Its pathway is amino-acid biosynthesis; L-leucine biosynthesis; L-leucine from 3-methyl-2-oxobutanoate: step 2/4. Catalyzes the isomerization between 2-isopropylmalate and 3-isopropylmalate, via the formation of 2-isopropylmaleate. The chain is 3-isopropylmalate dehydratase large subunit from Shewanella sp. (strain W3-18-1).